The sequence spans 211 residues: Urease accessory protein UreG (211 aa).

16–23 (GPVGSGKT) provides a ligand contact to GTP.

This sequence belongs to the SIMIBI class G3E GTPase family. UreG subfamily. Homodimer. UreD, UreF and UreG form a complex that acts as a GTP-hydrolysis-dependent molecular chaperone, activating the urease apoprotein by helping to assemble the nickel containing metallocenter of UreC. The UreE protein probably delivers the nickel.

Its subcellular location is the cytoplasm. Facilitates the functional incorporation of the urease nickel metallocenter. This process requires GTP hydrolysis, probably effectuated by UreG. The polypeptide is Urease accessory protein UreG (Janthinobacterium sp. (strain Marseille) (Minibacterium massiliensis)).